The following is a 338-amino-acid chain: Tetraacyldisaccharide 4'-kinase (338 aa).

ATP is bound at residue 65–72 (TVGGTGKT).

This sequence belongs to the LpxK family.

It carries out the reaction a lipid A disaccharide + ATP = a lipid IVA + ADP + H(+). It functions in the pathway glycolipid biosynthesis; lipid IV(A) biosynthesis; lipid IV(A) from (3R)-3-hydroxytetradecanoyl-[acyl-carrier-protein] and UDP-N-acetyl-alpha-D-glucosamine: step 6/6. In terms of biological role, transfers the gamma-phosphate of ATP to the 4'-position of a tetraacyldisaccharide 1-phosphate intermediate (termed DS-1-P) to form tetraacyldisaccharide 1,4'-bis-phosphate (lipid IVA). The chain is Tetraacyldisaccharide 4'-kinase from Paraburkholderia xenovorans (strain LB400).